We begin with the raw amino-acid sequence, 238 residues long: Heme oxygenase 1 (238 aa).

This sequence belongs to the heme oxygenase family.

It carries out the reaction heme b + 3 reduced [NADPH--hemoprotein reductase] + 3 O2 = biliverdin IXalpha + CO + Fe(2+) + 3 oxidized [NADPH--hemoprotein reductase] + 3 H2O + H(+). Functionally, catalyzes the opening of the heme ring with the release of iron. Key enzyme in the synthesis of the chromophoric part of the photosynthetic antennae. Upon overexpression in E.coli with PCB:ferredoxin oxidoreductase, CpeS and either CpcB or PecB permits synthesis of phycocyanin-coupled CpcB or PecB. The polypeptide is Heme oxygenase 1 (pbsA1) (Nostoc sp. (strain PCC 7120 / SAG 25.82 / UTEX 2576)).